The sequence spans 256 residues: tRNA pseudouridine synthase A 1 (256 aa).

The active-site Nucleophile is the Asp53. Substrate is bound at residue Tyr111.

The protein belongs to the tRNA pseudouridine synthase TruA family. Homodimer.

The catalysed reaction is uridine(38/39/40) in tRNA = pseudouridine(38/39/40) in tRNA. Functionally, formation of pseudouridine at positions 38, 39 and 40 in the anticodon stem and loop of transfer RNAs. This Protochlamydia amoebophila (strain UWE25) protein is tRNA pseudouridine synthase A 1.